The chain runs to 375 residues: uncharacterized protein (375 aa).

The segment covering 1-12 (MAGNKKQVKKNT) has biased composition (basic residues). Disordered regions lie at residues 1 to 76 (MAGN…EKKS) and 119 to 274 (KNKN…KEIK). Positions 26 to 39 (DTSNLDTAVQTSAS) are enriched in polar residues. Residues 129 to 141 (TATDGTTTTTNIP) show a composition bias toward low complexity. Basic and acidic residues predominate over residues 175-185 (DETHSHKEEPK). Composition is skewed to low complexity over residues 198–212 (SKQQ…SSSS) and 225–241 (PTPT…KSTP). Basic and acidic residues predominate over residues 256-274 (EQPKEKSSPAPVKKEKEIK). The next 2 helical transmembrane spans lie at 299–319 (VVYK…LVPL) and 327–347 (IYSY…TLFI). Positions 355-375 (ASKEQKSKSGNKKSTTRKVKA) are disordered. Over residues 363–375 (SGNKKSTTRKVKA) the composition is skewed to basic residues.

The protein resides in the membrane. This is an uncharacterized protein from Dictyostelium discoideum (Social amoeba).